The primary structure comprises 281 residues: Tumor necrosis factor ligand superfamily member 6 (281 aa).

Residues Met1–Gly80 lie on the Cytoplasmic side of the membrane. Residues Ser20 to Leu71 are disordered. Residues Arg43 to Pro70 are compositionally biased toward pro residues. Residues Leu81–Phe102 traverse the membrane as a helical; Signal-anchor for type II membrane protein segment. At Gln103–Leu281 the chain is on the extracellular side. A compositionally biased stretch (polar residues) spans Thr118–Glu128. The segment at Thr118–Glu142 is disordered. Residues Lys145 to Leu281 form the THD domain. Residue Asn184 is glycosylated (N-linked (GlcNAc...) asparagine). A disulfide bridge links Cys202 with Cys233. N-linked (GlcNAc...) asparagine glycans are attached at residues Asn250 and Asn260.

This sequence belongs to the tumor necrosis factor family. Homotrimer. Interacts with ARHGAP9, BAIAP2L1, BTK, CACNB3, CACNB4, CRK, DLG2, DNMBP, DOCK4, EPS8L3, FGR, FYB1, FYN, HCK, ITK, ITSN2, KALRN, LYN, MACC1, MIA, MPP4, MYO15A, NCF1, NCK1, NCK2, NCKIPSD, OSTF1, PIK3R1, PSTPIP1, RIMBP3C, SAMSN1, SH3GL3, SH3PXD2B, SH3PXD2A, SH3RF2, SKAP2, SNX33, SNX9, SORBS3, SPTA1, SRC, SRGAP1, SRGAP2, SRGAP3, TEC, TJP3 and YES1. The soluble form derives from the membrane form by proteolytic processing. The membrane-bound form undergoes two successive intramembrane proteolytic cleavages. The first one is processed by ADAM10 producing an N-terminal fragment, which lacks the receptor-binding extracellular domain. This ADAM10-processed FasL (FasL APL) remnant form is still membrane anchored and further processed by SPPL2A that liberates the FasL intracellular domain (FasL ICD). FasL shedding by ADAM10 is a prerequisite for subsequent intramembrane cleavage by SPPL2A in T-cells. Post-translationally, N-glycosylated. Glycosylation enhances apoptotic activity. In terms of processing, phosphorylated by FGR on tyrosine residues; this is required for ubiquitination and subsequent internalization. Monoubiquitinated.

Its subcellular location is the cell membrane. It is found in the cytoplasmic vesicle lumen. It localises to the lysosome lumen. The protein resides in the secreted. The protein localises to the nucleus. Functionally, cytokine that binds to TNFRSF6/FAS, a receptor that transduces the apoptotic signal into cells. Involved in cytotoxic T-cell-mediated apoptosis, natural killer cell-mediated apoptosis and in T-cell development. Initiates fratricidal/suicidal activation-induced cell death (AICD) in antigen-activated T-cells contributing to the termination of immune responses. TNFRSF6/FAS-mediated apoptosis also has a role in the induction of peripheral tolerance. Binds to TNFRSF6B/DcR3, a decoy receptor that blocks apoptosis. Induces FAS-mediated activation of NF-kappa-B, initiating non-apoptotic signaling pathways. Can induce apoptosis but does not appear to be essential for this process. Its function is as follows. Cytoplasmic form induces gene transcription inhibition. This chain is Tumor necrosis factor ligand superfamily member 6 (FASLG), found in Homo sapiens (Human).